We begin with the raw amino-acid sequence, 257 residues long: Hydroxyacylglutathione hydrolase (257 aa).

Zn(2+) contacts are provided by H54, H56, D58, H59, H110, D131, and H169.

This sequence belongs to the metallo-beta-lactamase superfamily. Glyoxalase II family. Monomer. The cofactor is Zn(2+).

It carries out the reaction an S-(2-hydroxyacyl)glutathione + H2O = a 2-hydroxy carboxylate + glutathione + H(+). The protein operates within secondary metabolite metabolism; methylglyoxal degradation; (R)-lactate from methylglyoxal: step 2/2. In terms of biological role, thiolesterase that catalyzes the hydrolysis of S-D-lactoyl-glutathione to form glutathione and D-lactic acid. The protein is Hydroxyacylglutathione hydrolase of Hahella chejuensis (strain KCTC 2396).